Reading from the N-terminus, the 842-residue chain is Protein P (842 aa).

The segment at 1–177 (MPLSYQHFRR…FCGSPYSWEQ (177 aa)) is terminal protein domain (TP). The segment at 178–345 (ELHHGAFLDG…YCLTHLVNLL (168 aa)) is spacer. Residues 186–273 (DGPSRMGEES…AKNIASRSAS (88 aa)) form a disordered region. The segment covering 223-239 (GPQSQQRPLDGSQQGRS) has biased composition (polar residues). The segment at 346–689 (EDWGPCTEHG…YLNLYPVARQ (344 aa)) is polymerase/reverse transcriptase domain (RT). Residues 356–599 (KHHIRIPRTP…YSLNFMGYVI (244 aa)) form the Reverse transcriptase domain. Residues aspartate 428, aspartate 550, and aspartate 551 each contribute to the Mg(2+) site.

It belongs to the hepadnaviridae P protein family.

The enzyme catalyses DNA(n) + a 2'-deoxyribonucleoside 5'-triphosphate = DNA(n+1) + diphosphate. It catalyses the reaction Endonucleolytic cleavage to 5'-phosphomonoester.. Its activity is regulated as follows. Activated by host HSP70 and HSP40 in vitro to be able to bind the epsilon loop of the pgRNA. Because deletion of the RNase H region renders the protein partly chaperone-independent, the chaperones may be needed indirectly to relieve occlusion of the RNA-binding site by this domain. Inhibited by several reverse-transcriptase inhibitors: Lamivudine, Adefovir and Entecavir. Multifunctional enzyme that converts the viral RNA genome into dsDNA in viral cytoplasmic capsids. This enzyme displays a DNA polymerase activity that can copy either DNA or RNA templates, and a ribonuclease H (RNase H) activity that cleaves the RNA strand of RNA-DNA heteroduplexes in a partially processive 3'- to 5'-endonucleasic mode. Neo-synthesized pregenomic RNA (pgRNA) are encapsidated together with the P protein, and reverse-transcribed inside the nucleocapsid. Initiation of reverse-transcription occurs first by binding the epsilon loop on the pgRNA genome, and is initiated by protein priming, thereby the 5'-end of (-)DNA is covalently linked to P protein. Partial (+)DNA is synthesized from the (-)DNA template and generates the relaxed circular DNA (RC-DNA) genome. After budding and infection, the RC-DNA migrates in the nucleus, and is converted into a plasmid-like covalently closed circular DNA (cccDNA). The activity of P protein does not seem to be necessary for cccDNA generation, and is presumably released from (+)DNA by host nuclear DNA repair machinery. The polypeptide is Protein P (Homo sapiens (Human)).